Reading from the N-terminus, the 191-residue chain is Cell division protein SepF (191 aa).

The disordered stretch occupies residues 21–96 (EVEEPAVASV…NQQPAQEKTT (76 aa)). Over residues 25-56 (PAVASVKRQQDAAQPASQQQKAQSHQYHQSAS) the composition is skewed to low complexity. 2 stretches are compositionally biased toward polar residues: residues 57–69 (RPSQ…GQNR) and 86–95 (HNQQPAQEKT).

The protein belongs to the SepF family. In terms of assembly, homodimer. Interacts with FtsZ.

The protein localises to the cytoplasm. Functionally, cell division protein that is part of the divisome complex and is recruited early to the Z-ring. Probably stimulates Z-ring formation, perhaps through the cross-linking of FtsZ protofilaments. Its function overlaps with FtsA. This Streptococcus mutans serotype c (strain ATCC 700610 / UA159) protein is Cell division protein SepF.